The chain runs to 96 residues: Myosuppressin (96 aa).

The N-terminal stretch at methionine 1 to cysteine 24 is a signal peptide. Residues alanine 25–methionine 80 constitute a propeptide that is removed on maturation. Glutamine 83 carries the post-translational modification Pyrrolidone carboxylic acid; partial. At phenylalanine 92 the chain carries Phenylalanine amide. A propeptide is located at residue arginine 96.

The protein belongs to the myosuppressin family. As to expression, expressed in corpora cardiaca (CC), corpora allata (CA), antennal lobe (AL) and gnathal ganglion (GNG) (at protein level). In its non-pyroglutamate form, expression in GNG detected in all animals, in AL, CC and in CA in most animals (at protein level). In its pyroglutamate form, expression in CC, CA and GNG detected in all animals, in AL in some animals (at protein level).

It localises to the secreted. In terms of biological role, myoinhibiting neuropeptide. This chain is Myosuppressin, found in Agrotis ipsilon (Black cutworm moth).